The primary structure comprises 248 residues: Thioredoxin-like protein AAED1, chloroplastic (248 aa).

The N-terminal 52 residues, 1-52, are a transit peptide targeting the chloroplast; the sequence is MAIALSSSSTITSITLQPKLKTIHGLGTVLPGYSVKSHFRSVSLRRSAVVVS. Residue Ala53 is modified to N-acetylalanine.

The protein belongs to the peroxiredoxin-like PRXL2 family. PRXL2C subfamily.

Its subcellular location is the plastid. The protein localises to the chloroplast. This is Thioredoxin-like protein AAED1, chloroplastic from Arabidopsis thaliana (Mouse-ear cress).